The chain runs to 211 residues: Large ribosomal subunit protein mL48 (211 aa).

Residues Met-1 to Arg-27 constitute a mitochondrion transit peptide. Lys-198 is subject to N6-succinyllysine.

Belongs to the mitochondrion-specific ribosomal protein mL48 family. Component of the mitochondrial ribosome large subunit (39S) which comprises a 16S rRNA and about 50 distinct proteins. Interacts with OXA1L.

It is found in the mitochondrion. In Mus musculus (Mouse), this protein is Large ribosomal subunit protein mL48 (Mrpl48).